The following is a 296-amino-acid chain: GTPase Era (296 aa).

Residues 3 to 170 (KSGFVTIIGR…IELMVKHLNE (168 aa)) enclose the Era-type G domain. The G1 stretch occupies residues 11-18 (GRPNVGKS). Position 11–18 (11–18 (GRPNVGKS)) interacts with GTP. A G2 region spans residues 37–41 (QTTRN). The tract at residues 58–61 (DTPG) is G3. GTP contacts are provided by residues 58-62 (DTPGM) and 120-123 (NKID). The G4 stretch occupies residues 120 to 123 (NKID). A G5 region spans residues 149–151 (ISA). The region spanning 201–277 (LSQEVPHGIA…NMKIWVKVKK (77 aa)) is the KH type-2 domain.

It belongs to the TRAFAC class TrmE-Era-EngA-EngB-Septin-like GTPase superfamily. Era GTPase family. Monomer.

The protein localises to the cytoplasm. It localises to the cell membrane. Its function is as follows. An essential GTPase that binds both GDP and GTP, with rapid nucleotide exchange. Plays a role in 16S rRNA processing and 30S ribosomal subunit biogenesis and possibly also in cell cycle regulation and energy metabolism. In Clostridium acetobutylicum (strain ATCC 824 / DSM 792 / JCM 1419 / IAM 19013 / LMG 5710 / NBRC 13948 / NRRL B-527 / VKM B-1787 / 2291 / W), this protein is GTPase Era.